The following is an 869-amino-acid chain: Phosphatidylethanolamine N-methyltransferase (869 aa).

N-acetylserine is present on Ser-2. Residues 2 to 55 (SSCKTTLSEMVGSVTKDRGTINVKARTRSSNVTFKPPVTHDMVRSLFDPTLKKS) are Lumenal-facing. A helical membrane pass occupies residues 56–76 (LLEKCIALAIISNFFICYWVF). Over 77 to 86 (QRFGLQFTKY) the chain is Cytoplasmic. Residues 87-107 (FFLVQYLFWRIAYNLGIGLVL) traverse the membrane as a helical segment. Residues 108–187 (HYQSHYETLT…EINVWLIFRQ (80 aa)) are Lumenal-facing. Residues 188-208 (FVDLILMQDFVTYIIYVYLSI) form a helical membrane-spanning segment. The Cytoplasmic segment spans residues 209-212 (PYSW). The chain crosses the membrane as a helical span at residues 213–233 (VQIFNWRSLLGVILILFNIWV). Topologically, residues 234–258 (KLDAHRVVKDYAWYWGDFFFLEESE) are lumenal. Residues 259 to 279 (LIFDGVFNISPHPMYSIGYLG) traverse the membrane as a helical segment. Topologically, residues 280-291 (YYGLSLICNDYK) are cytoplasmic. A helical membrane pass occupies residues 292–310 (VLLVSVFGHYSQFLFLKYV). At 311–362 (ENPHIERTYGDGTDSDSQMNSRIDDLISKENYDYSRPLINMGLSFNNFNKLR) the chain is on the lumenal side. Residues 363–383 (FTDYFTIGTVAALMLGTIMNA) form a helical membrane-spanning segment. Topologically, residues 384–389 (RFINLN) are cytoplasmic. A helical transmembrane segment spans residues 390–410 (YLFITVFVTKLVSWLFISTIL). Residues 411 to 439 (YKQSQSKWFTRLFLENGYTQVYSYEQWQF) are Lumenal-facing. The chain crosses the membrane as a helical span at residues 440–460 (IYNYYLVLTYTLMIIYTGLQI). Residues 461 to 463 (WSN) are Cytoplasmic-facing. Residues 464–484 (FSNINNSQLIFGLILVALQTW) form a helical membrane-spanning segment. At 485–534 (CDKETRLAISDFGWFYGDFFLSNYISTRKLTSQGIYRYLNHPEAVLGVVG) the chain is on the lumenal side. A helical membrane pass occupies residues 535 to 555 (VWGTVLMTNFAVTNIILAVLW). The Cytoplasmic segment spans residues 556-869 (TLTNFILVKF…DIKQTLDSLA (314 aa)).

It belongs to the class VI-like SAM-binding methyltransferase superfamily. CHO2 family.

The protein resides in the endoplasmic reticulum membrane. It carries out the reaction a 1,2-diacyl-sn-glycero-3-phosphoethanolamine + S-adenosyl-L-methionine = a 1,2-diacyl-sn-glycero-3-phospho-N-methylethanolamine + S-adenosyl-L-homocysteine + H(+). The protein operates within phospholipid metabolism; phosphatidylcholine biosynthesis. Its function is as follows. Catalyzes the first step of the methylation pathway of phosphatidylcholine biosynthesis, the SAM-dependent methylation of phosphatidylethanolamine (PE) to phosphatidylmonomethylethanolamine (PMME). The sequence is that of Phosphatidylethanolamine N-methyltransferase (CHO2) from Saccharomyces cerevisiae (strain AWRI1631) (Baker's yeast).